The chain runs to 297 residues: Guanylate kinase (297 aa).

The 180-residue stretch at 5–184 folds into the Guanylate kinase-like domain; that stretch reads GKVIIISGPS…AVSKITDILI (180 aa). 12 to 19 contacts ATP; it reads GPSGVGKG. The unknown stretch occupies residues 205-297; the sequence is ENIVDQKYTY…IKQRSDFSGD (93 aa).

Belongs to the guanylate kinase family.

The protein resides in the cytoplasm. It carries out the reaction GMP + ATP = GDP + ADP. Essential for recycling GMP and indirectly, cGMP. The chain is Guanylate kinase (gmk) from Mesoplasma florum (strain ATCC 33453 / NBRC 100688 / NCTC 11704 / L1) (Acholeplasma florum).